Here is a 930-residue protein sequence, read N- to C-terminus: Isoleucine--tRNA ligase (930 aa).

The short motif at 57-67 (PYANGNIHVGH) is the 'HIGH' region element. Glu554 contributes to the L-isoleucyl-5'-AMP binding site. The 'KMSKS' region signature appears at 595-599 (KMSKS). Lys598 is a binding site for ATP. Residues Cys888, Cys891, Cys908, and Cys911 each coordinate Zn(2+).

Belongs to the class-I aminoacyl-tRNA synthetase family. IleS type 1 subfamily. Monomer. Requires Zn(2+) as cofactor.

The protein localises to the cytoplasm. The catalysed reaction is tRNA(Ile) + L-isoleucine + ATP = L-isoleucyl-tRNA(Ile) + AMP + diphosphate. Its function is as follows. Catalyzes the attachment of isoleucine to tRNA(Ile). As IleRS can inadvertently accommodate and process structurally similar amino acids such as valine, to avoid such errors it has two additional distinct tRNA(Ile)-dependent editing activities. One activity is designated as 'pretransfer' editing and involves the hydrolysis of activated Val-AMP. The other activity is designated 'posttransfer' editing and involves deacylation of mischarged Val-tRNA(Ile). The chain is Isoleucine--tRNA ligase from Streptococcus pneumoniae (strain ATCC 700669 / Spain 23F-1).